A 244-amino-acid polypeptide reads, in one-letter code: Mitochondrial inner membrane protease atp23 (244 aa).

A disordered region spans residues 1-25; it reads MSSSEGNKPPLVPDSTKESEPQFDP. His144 contributes to the a divalent metal cation binding site. Glu145 is an active-site residue. His148 is an a divalent metal cation binding site.

Belongs to the peptidase M76 family.

The protein resides in the mitochondrion inner membrane. Functionally, has a dual role in the assembly of mitochondrial ATPase. Acts as a protease that removes N-terminal residues of mitochondrial ATPase CF(0) subunit 6 at the intermembrane space side. Also involved in the correct assembly of the membrane-embedded ATPase CF(0) particle, probably mediating association of subunit 6 with the subunit 9 ring. This chain is Mitochondrial inner membrane protease atp23 (atp23), found in Botryotinia fuckeliana (strain B05.10) (Noble rot fungus).